Reading from the N-terminus, the 420-residue chain is Pyridinium-3,5-bisthiocarboxylic acid mononucleotide nickel insertion protein (420 aa).

Belongs to the LarC family.

The catalysed reaction is Ni(II)-pyridinium-3,5-bisthiocarboxylate mononucleotide = pyridinium-3,5-bisthiocarboxylate mononucleotide + Ni(2+). In terms of biological role, involved in the biosynthesis of a nickel-pincer cofactor ((SCS)Ni(II) pincer complex). Binds Ni(2+), and functions in nickel delivery to pyridinium-3,5-bisthiocarboxylic acid mononucleotide (P2TMN), to form the mature cofactor. Is required for the activation of the lactate racemase LarA. May also be involved in the activation of other nickel-pincer cofactor-dependent enzymes. The sequence is that of Pyridinium-3,5-bisthiocarboxylic acid mononucleotide nickel insertion protein from Lactiplantibacillus plantarum (strain ATCC BAA-793 / NCIMB 8826 / WCFS1) (Lactobacillus plantarum).